An 86-amino-acid chain; its full sequence is Insulin-related peptide 2 (86 aa).

A signal peptide spans 1 to 19 (MKFYIVFALILACAACVSS). The propeptide occupies 20 to 43 (QEGTNFYCGRQLSRTLALVCWGAE). Position 63 is an arginine amide (R63). Residues 67–86 (GPVDECCLKPCSIEEMLTYC) constitute a propeptide that is removed on maturation.

The protein belongs to the insulin family. DAGWWVPPQSARALGGGR-amide: Expressed in corpora cardiaca (CC), corpora allata (CA), antennal lobe (AL) and gnathal ganglion (GNG) (at protein level). Expression in CC and CA detected in most animals, in AL in some animals and in GNG in few animals (at protein level).

Its subcellular location is the secreted. This chain is Insulin-related peptide 2, found in Agrotis ipsilon (Black cutworm moth).